The sequence spans 500 residues: MTIFDNYEVWFVIGSQHLYGPEALRQVTKHAEHVVNSLNAEAKLPCKLVLKPLGTTPDEITHICRDANYDDKCAGLVVWLHTFSPAKMWINGLTILNKPLLQFHTQYNAALPWDSIDMDFMNLNQTAHGGREFGFIGARMRQQHSVVTGHWQDKEAHQRIGGWMRQAVSKQDTRHLKVCRFGDNMREVAVTDGDKVAAQIKFGFSVNTWAVGDLVQVVNSISDGDISALVDEYESSYRLTPAAQVHGDKRQNVLDAARIELGMKRFLEQGGFHAFTTTFEDLHGLKQLPGLAVQRLMQQGYGFAGEGDWKTAALLRIMKVMSTGLQGGTSFMEDYTYHFDNGNDLVLGSHMLEVCPTIATAEKPILDVQPLGIGGKADPARLIFNTQTGPAIVASLIDLGDRFRLLVNTIETVPTPHDLPKLPVANALWKAQPDLRTASEAWIIAGGAHHTVFSHALNLDDMRQFAELHDIELTVIDNDTRLPSFKDALRWNEVYYGSKR.

The Mn(2+) site is built by Glu306, Glu333, His350, and His450.

This sequence belongs to the arabinose isomerase family. In terms of assembly, homohexamer. The cofactor is Mn(2+).

It catalyses the reaction beta-L-arabinopyranose = L-ribulose. Its pathway is carbohydrate degradation; L-arabinose degradation via L-ribulose; D-xylulose 5-phosphate from L-arabinose (bacterial route): step 1/3. Its function is as follows. Catalyzes the conversion of L-arabinose to L-ribulose. The protein is L-arabinose isomerase of Klebsiella pneumoniae subsp. pneumoniae (strain ATCC 700721 / MGH 78578).